Reading from the N-terminus, the 156-residue chain is ATP synthase subunit b 2 (156 aa).

A helical transmembrane segment spans residues 7-29; sequence LLGQAISFAIFVWFCMKYVWPPV.

The protein belongs to the ATPase B chain family. In terms of assembly, F-type ATPases have 2 components, F(1) - the catalytic core - and F(0) - the membrane proton channel. F(1) has five subunits: alpha(3), beta(3), gamma(1), delta(1), epsilon(1). F(0) has three main subunits: a(1), b(2) and c(10-14). The alpha and beta chains form an alternating ring which encloses part of the gamma chain. F(1) is attached to F(0) by a central stalk formed by the gamma and epsilon chains, while a peripheral stalk is formed by the delta and b chains.

The protein localises to the cell inner membrane. Functionally, f(1)F(0) ATP synthase produces ATP from ADP in the presence of a proton or sodium gradient. F-type ATPases consist of two structural domains, F(1) containing the extramembraneous catalytic core and F(0) containing the membrane proton channel, linked together by a central stalk and a peripheral stalk. During catalysis, ATP synthesis in the catalytic domain of F(1) is coupled via a rotary mechanism of the central stalk subunits to proton translocation. In terms of biological role, component of the F(0) channel, it forms part of the peripheral stalk, linking F(1) to F(0). The polypeptide is ATP synthase subunit b 2 (Marinomonas sp. (strain MWYL1)).